The following is a 445-amino-acid chain: MAAEEGGDGRRNMGNPPPPAPAESEEEDDNEMEVEDQDGKEAEKPNMINFDTSLPTSHMYLGSDMEEFHGRTLHDDDSCQVIPVLPHVMVMLIPGQTLPLQLFHPQEVSMVRNLIQKDRTFAVLAYSNVREREAHFGTTAEIYAYREEQEYGIETVKVKAIGRQRFKVLEIRTQSDGIQQAKVQILPERVLPSTMSAVQLQSLSRRHIFPSSKPKVWQDRAFRQWWQKYQKRKFHCASLTSWPPWLYSLYDAETLMERVKRQLHEWDENLKDESLPTNPIDFSYRVAACLPIDDALRIQLLKIGSAIQRLRCELDIMNKCTSLCCKQCQDTEITTKNEIFSLSLCGPMAAYVNPHGYIHETLTVYKACNLNLSGRPSTEHSWFPGYAWTIAQCRICGNHMGWKFTATKKDMSPQKFWGLTRSALLPRIPEAEDELGHDRSPLLCL.

The tract at residues 1 to 50 (MAAEEGGDGRRNMGNPPPPAPAESEEEDDNEMEVEDQDGKEAEKPNMINF) is disordered. Over residues 23 to 36 (ESEEEDDNEMEVED) the composition is skewed to acidic residues. Residues 82 to 321 (IPVLPHVMVM…CELDIMNKCT (240 aa)) form the Lon N-terminal domain. The CULT domain occupies 320–428 (CTSLCCKQCQ…LTRSALLPRI (109 aa)). Residues Cys325 and Cys328 each coordinate Zn(2+). His380, Trp382, and Trp388 together coordinate (S)-thalidomide. 2 residues coordinate Zn(2+): Cys393 and Cys396.

This sequence belongs to the CRBN family. As to quaternary structure, component of a DCX (DDB1-CUL4-X-box) protein ligase complex. Interacts directly with DDB1.

The protein localises to the cytoplasm. It localises to the nucleus. The protein operates within protein modification; protein ubiquitination. Substrate recognition component of a DCX (DDB1-CUL4-X-box) E3 protein ligase complex that mediates the ubiquitination and subsequent proteasomal degradation of target proteins, such as MEIS2. Normal degradation of key regulatory proteins is required for normal limb outgrowth and expression of the fibroblast growth factor FGF8. Maintains presynaptic glutamate release and consequently cognitive functions, such as memory and learning, by negatively regulating large-conductance calcium-activated potassium (BK) channels in excitatory neurons. Likely to function by regulating the assembly and neuronal surface expression of BK channels via its interaction with KCNT1. May also be involved in regulating anxiety-like behaviors via a BK channel-independent mechanism. This is Protein cereblon (CRBN) from Gallus gallus (Chicken).